A 149-amino-acid polypeptide reads, in one-letter code: Probable glycine-rich RNA-binding protein 1 (149 aa).

In terms of domain architecture, RRM spans 8–83 (YRCFVGGLAW…LDGRNITAQA (76 aa)). The segment at 80 to 149 (TAQARGSGTR…GRSEGGSWRN (70 aa)) is disordered. 3 stretches are compositionally biased toward gly residues: residues 87–101 (GTRGGMVGGYGSGGY), 110–123 (YNRGGGGGYGGGYG), and 131–143 (YGDGGYGGQGRSE).

The protein belongs to the GR-RBP family.

Its function is as follows. Possibly has a role in RNA transcription or processing during stress. The sequence is that of Probable glycine-rich RNA-binding protein 1 (RBG1) from Arabidopsis thaliana (Mouse-ear cress).